The sequence spans 252 residues: Octanoyltransferase (252 aa).

One can recognise a BPL/LPL catalytic domain in the interval 56–237 (ADTGDEIWLV…RLIANLDGAS (182 aa)). Substrate-binding positions include 96-103 (RGGQITYH), 168-170 (ALG), and 181-183 (GLS). Residue Cys-199 is the Acyl-thioester intermediate of the active site.

It belongs to the LipB family.

The protein resides in the cytoplasm. The enzyme catalyses octanoyl-[ACP] + L-lysyl-[protein] = N(6)-octanoyl-L-lysyl-[protein] + holo-[ACP] + H(+). Its pathway is protein modification; protein lipoylation via endogenous pathway; protein N(6)-(lipoyl)lysine from octanoyl-[acyl-carrier-protein]: step 1/2. In terms of biological role, catalyzes the transfer of endogenously produced octanoic acid from octanoyl-acyl-carrier-protein onto the lipoyl domains of lipoate-dependent enzymes. Lipoyl-ACP can also act as a substrate although octanoyl-ACP is likely to be the physiological substrate. The polypeptide is Octanoyltransferase (Burkholderia lata (strain ATCC 17760 / DSM 23089 / LMG 22485 / NCIMB 9086 / R18194 / 383)).